Consider the following 230-residue polypeptide: Thymine/uracil-DNA glycosylase (230 aa).

Positions 204, 211, 214, and 221 each coordinate [4Fe-4S] cluster.

It belongs to the Nth/MutY family. [4Fe-4S] cluster serves as cofactor.

It catalyses the reaction Hydrolyzes mismatched double-stranded DNA and polynucleotides, releasing free thymine.. In terms of biological role, DNA glycosylase that excises thymine from T/G mismatches and uracil from U/G mismatches. Can also process T/GO and U/GO, but not A/G, T/C and U/C. Has weak AP lyase activity. In Pyrobaculum aerophilum (strain ATCC 51768 / DSM 7523 / JCM 9630 / CIP 104966 / NBRC 100827 / IM2), this protein is Thymine/uracil-DNA glycosylase.